Here is a 173-residue protein sequence, read N- to C-terminus: Crossover junction endodeoxyribonuclease RuvC (173 aa).

Residues D8, E67, and D139 contribute to the active site. Residues D8, E67, and D139 each contribute to the Mg(2+) site.

It belongs to the RuvC family. As to quaternary structure, homodimer which binds Holliday junction (HJ) DNA. The HJ becomes 2-fold symmetrical on binding to RuvC with unstacked arms; it has a different conformation from HJ DNA in complex with RuvA. In the full resolvosome a probable DNA-RuvA(4)-RuvB(12)-RuvC(2) complex forms which resolves the HJ. Requires Mg(2+) as cofactor.

It is found in the cytoplasm. The catalysed reaction is Endonucleolytic cleavage at a junction such as a reciprocal single-stranded crossover between two homologous DNA duplexes (Holliday junction).. Functionally, the RuvA-RuvB-RuvC complex processes Holliday junction (HJ) DNA during genetic recombination and DNA repair. Endonuclease that resolves HJ intermediates. Cleaves cruciform DNA by making single-stranded nicks across the HJ at symmetrical positions within the homologous arms, yielding a 5'-phosphate and a 3'-hydroxyl group; requires a central core of homology in the junction. The consensus cleavage sequence is 5'-(A/T)TT(C/G)-3'. Cleavage occurs on the 3'-side of the TT dinucleotide at the point of strand exchange. HJ branch migration catalyzed by RuvA-RuvB allows RuvC to scan DNA until it finds its consensus sequence, where it cleaves and resolves the cruciform DNA. The chain is Crossover junction endodeoxyribonuclease RuvC from Serratia proteamaculans (strain 568).